Reading from the N-terminus, the 1434-residue chain is DNA-directed RNA polymerase subunit beta' (1434 aa).

Zn(2+) is bound by residues Cys-70, Cys-72, Cys-85, and Cys-88. Positions 460, 462, and 464 each coordinate Mg(2+). Zn(2+) is bound by residues Cys-840, Cys-914, Cys-921, and Cys-924.

Belongs to the RNA polymerase beta' chain family. As to quaternary structure, the RNAP catalytic core consists of 2 alpha, 1 beta, 1 beta' and 1 omega subunit. When a sigma factor is associated with the core the holoenzyme is formed, which can initiate transcription. Requires Mg(2+) as cofactor. Zn(2+) is required as a cofactor.

The catalysed reaction is RNA(n) + a ribonucleoside 5'-triphosphate = RNA(n+1) + diphosphate. DNA-dependent RNA polymerase catalyzes the transcription of DNA into RNA using the four ribonucleoside triphosphates as substrates. The sequence is that of DNA-directed RNA polymerase subunit beta' from Tolumonas auensis (strain DSM 9187 / NBRC 110442 / TA 4).